Consider the following 230-residue polypeptide: Large ribosomal subunit protein uL1 (230 aa).

This sequence belongs to the universal ribosomal protein uL1 family. As to quaternary structure, part of the 50S ribosomal subunit.

In terms of biological role, binds directly to 23S rRNA. The L1 stalk is quite mobile in the ribosome, and is involved in E site tRNA release. Functionally, protein L1 is also a translational repressor protein, it controls the translation of the L11 operon by binding to its mRNA. The protein is Large ribosomal subunit protein uL1 of Lactobacillus johnsonii (strain CNCM I-12250 / La1 / NCC 533).